The sequence spans 304 residues: MILGRTISLFLGCSALVSGALIEHHAASSTDQPVDVPYNLDMFSQAAVLAQETYCGEQAHDYGLKLGDATLLWTAGDGNVRQRVNLYQSDSLGIAVAIQGTNTSSLRSDLHDAQLRPVDPDSRYRRFLPQGTKVMNGFQKGYTDLVDDIFDHVKKFKQEKNESRVTVIGHSLGAAIGLLASLDINLRLEDGLFKSYLFGLPRVGNPIFANFVDRKIGDKLHWVVNGRDWVPTVPPRALGYQHPSNYVWIYPANSTNWKLYPGQENVHGMLTVAREFNFDDHEGIYFHTQIGASLGKCPAVLGGY.

The first 19 residues, 1–19, serve as a signal peptide directing secretion; the sequence is MILGRTISLFLGCSALVSG. A disulfide bridge connects residues C55 and C297. N102 and N161 each carry an N-linked (GlcNAc...) asparagine glycan. The Nucleophile role is filled by S171. D228 is an active-site residue. N253 carries N-linked (GlcNAc...) asparagine glycosylation. H281 is a catalytic residue.

The protein belongs to the AB hydrolase superfamily. Lipase family. Class 3 subfamily.

The protein localises to the secreted. The protein resides in the cell wall. The enzyme catalyses a monoacylglycerol + H2O = glycerol + a fatty acid + H(+). It carries out the reaction a diacylglycerol + H2O = a monoacylglycerol + a fatty acid + H(+). Functionally, secreted lipase involved in Dandruff and seborrheic dermatitis (D/SD) probably via lipase-mediated breakdown of sebaceous lipids and release of irritating free fatty acids. Shows activity against monoglyceride and diglyceride substrates, but not triglyceride substrates and does not exhibit regio-selective production of diacylglycerols. Hydrolyzes both 1,2- and 1,3-diacylglycerols. Also hydrolyzes distearin, dilinolein and dipalmitolein. Cleaves oleic acid from 1,2 isomers of diolein on both the 1 and the 2 position of the glycerol backbone, resulting mainly in free fatty acids but no monoolein is detected. Shows activity on monoolein and liberates mostly free fatty acids, but can also perform the reverse reaction and produce diolein. The polypeptide is Secreted mono- and diacylglycerol lipase MDL2 (Malassezia globosa (strain ATCC MYA-4612 / CBS 7966) (Dandruff-associated fungus)).